Reading from the N-terminus, the 296-residue chain is MAVLAPLIALVYSVPRLSRWLARPYYFLSALLSAAFLLVRKLPPVCESLPTQREDGNPCDFDWREVEILMFLSAIVMMKNRRSITVEQHVGNIFMFSKVANAILFFRLDIRMGLLYITLCIVFLMTCKPPLYMGPEYIKYFSDKTIDEELERDKRVTWIVEFFANWSSDCQSFAPIYADLSLKYNCTGLNFGKVDVGRYTDVSTRYKVSTSPLTKQLPTLILFQGGKEVMRRPQIDKKGRAVSWTFSEENVIREFNLNELYQRAKKLSKAGDKIPEEQPVAAVPAAVPDEESKKDK.

An N-terminal signal peptide occupies residues 1-48 (MAVLAPLIALVYSVPRLSRWLARPYYFLSALLSAAFLLVRKLPPVCES). Residues 49–102 (LPTQREDGNPCDFDWREVEILMFLSAIVMMKNRRSITVEQHVGNIFMFSKVANA) lie on the Extracellular side of the membrane. The helical transmembrane segment at 103–125 (ILFFRLDIRMGLLYITLCIVFLM) threads the bilayer. Topologically, residues 126-296 (TCKPPLYMGP…VPDEESKKDK (171 aa)) are cytoplasmic. The Thioredoxin domain occupies 132 to 269 (YMGPEYIKYF…LYQRAKKLSK (138 aa)). Residues serine 211 and serine 243 each carry the phosphoserine modification. A disordered region spans residues 272-296 (DKIPEEQPVAAVPAAVPDEESKKDK). Low complexity predominate over residues 277–287 (EQPVAAVPAAV). Residues 293-296 (KKDK) carry the Di-lysine motif motif.

In terms of assembly, monomer. Homodimer; disulfide-linked. Occurs in both reduced and oxidized monomeric form. Oxidative conditions increase homodimerization. Interacts with CANX. Interacts with ATP2A2.

It is found in the endoplasmic reticulum membrane. Its subcellular location is the mitochondrion membrane. In terms of biological role, endoplasmic reticulum and mitochondria-associated protein that probably functions as a regulator of cellular redox state and thereby regulates protein post-translational modification, protein folding and mitochondrial activity. Indirectly regulates neuronal proliferation, migration, and organization in the developing brain. The sequence is that of Thioredoxin-related transmembrane protein 2 (TMX2) from Bos taurus (Bovine).